The sequence spans 229 residues: Platelet-activating factor acetylhydrolase IB subunit alpha2 (229 aa).

Ser2 carries the N-acetylserine modification. Ser2 bears the Phosphoserine mark. Residue Ser48 is part of the active site. Ser64 is subject to Phosphoserine. Active-site residues include Asp193 and His196. Thr220 is subject to Phosphothreonine.

The protein belongs to the 'GDSL' lipolytic enzyme family. Platelet-activating factor acetylhydrolase IB beta/gamma subunits subfamily. In terms of assembly, forms a catalytic dimer which is either homodimer (alpha2/alpha2 homodimer) or heterodimer with PAFAH1B3 (alpha2/alpha1 heterodimer). Component of the cytosolic (PAF-AH (I)) heterotetrameric enzyme, which is composed of PAFAH1B1 (beta), PAFAH1B2 (alpha2) and PAFAH1B3 (alpha1) subunits. The catalytic activity of the enzyme resides in the alpha1 (PAFAH1B3) and alpha2 (PAFAH1B2) subunits, whereas the beta subunit (PAFAH1B1) has regulatory activity. Trimer formation is not essential for the catalytic activity. Interacts (homodimer form) with PAFAH1B1 (homodimer form); PAFAH1B2 competes with NDEL1 for PAFAH1B1 binding. Interacts with VLDLR; this interaction may modulate the Reelin pathway.

The protein resides in the cytoplasm. The enzyme catalyses a 1-O-alkyl-2-acetyl-sn-glycero-3-phosphocholine + H2O = a 1-O-alkyl-sn-glycero-3-phosphocholine + acetate + H(+). It catalyses the reaction 1-O-hexadecyl-2-acetyl-sn-glycero-3-phosphocholine + H2O = 1-O-hexadecyl-sn-glycero-3-phosphocholine + acetate + H(+). It carries out the reaction 1-O-hexadecyl-2-acetyl-sn-glycero-3-phosphate + H2O = 1-O-hexadecyl-sn-glycero-3-phosphate + acetate + H(+). The catalysed reaction is 1-O-hexadecyl-2-acetyl-sn-glycero-3-phosphoethanolamine + H2O = 1-O-hexadecyl-sn-glycero-3-phosphoethanolamine + acetate + H(+). With respect to regulation, beta subunit (PAFAH1B1) stimulates the acetylhydrolase activity of the alpha2/alpha2 catalytic homodimer. Functionally, alpha2 catalytic subunit of the cytosolic type I platelet-activating factor (PAF) acetylhydrolase (PAF-AH (I)) heterotetrameric enzyme that catalyzes the hydrolyze of the acetyl group at the sn-2 position of PAF and its analogs and modulates the action of PAF. The activity and substrate specificity of PAF-AH (I) are affected by its subunit composition. The alpha2/alpha2 homodimer (PAFAH1B2/PAFAH1B2 homodimer) hydrolyzes PAF and 1-O-alkyl-2-acetyl-sn-glycero-3-phosphorylethanolamine (AAGPE) more efficiently than 1-O-alkyl-2-acetyl-sn-glycero-3-phosphoric acid (AAGPA). In contrast, the alpha1/alpha2 heterodimer(PAFAH1B3/PAFAH1B3 heterodimer) hydrolyzes AAGPA more efficiently than PAF, but has little hydrolytic activity towards AAGPE. May play a role in male germ cell meiosis during the late pachytenestage and meiotic divisions as well as early spermiogenesis. The polypeptide is Platelet-activating factor acetylhydrolase IB subunit alpha2 (Pongo abelii (Sumatran orangutan)).